The following is an 88-amino-acid chain: Large ribosomal subunit protein bL31B (88 aa).

It belongs to the bacterial ribosomal protein bL31 family. Type B subfamily. Part of the 50S ribosomal subunit.

The sequence is that of Large ribosomal subunit protein bL31B from Janthinobacterium sp. (strain Marseille) (Minibacterium massiliensis).